Reading from the N-terminus, the 487-residue chain is MPN domain-containing protein (487 aa).

The segment at 1–55 (MAAPESLSPGATAEEAPEEDEDDAEAEDPERGTGSGGRSGSLGGSGGGTAGPGMA) is disordered. Position 2 is an N-acetylalanine (alanine 2). At serine 8 the chain carries Phosphoserine. The segment covering 15–28 (EAPEEDEDDAEAED) has biased composition (acidic residues). Residues 33 to 55 (TGSGGRSGSLGGSGGGTAGPGMA) show a composition bias toward gly residues. Residues 61–156 (TRRAVTLRVL…KYKAAWLRRH (96 aa)) enclose the RAMA domain. The DNA site is built by serine 113, serine 115, and tryptophan 135. The tract at residues 163–217 (ATADESPTSEGEEEELLLEEEEEDVLAGVSSEDKGHRPPGKGSLEPEATPPGKRM) is disordered. 2 positions are modified to phosphoserine: serine 168 and serine 171. Residues 172–187 (EGEEEELLLEEEEEDV) show a composition bias toward acidic residues. The 136-residue stretch at 258–393 (VAVSSNVLFL…PESKICPFWV (136 aa)) folds into the MPN domain. 3 residues coordinate Zn(2+): histidine 335, histidine 337, and aspartate 348. A JAMM motif motif is present at residues 335-348 (HSHPHSPAVPSLQD).

Belongs to the peptidase M67 family. In terms of assembly, monomer. Mainly monomoric, but when binds to dsDNA, forms homotetramer assembled into two homodimers. May interact with histones; this interaction is facilitated by. In terms of processing, degraded following binding to N(6)-methyladenosine methylated DNA (m6A).

Its function is as follows. Probable protease. Acts as a sensor of N(6)-methyladenosine methylation on DNA (m6A): recognizes and binds m6A DNA, leading to its degradation. Binds only double strand DNA (dsDNA) in a sequence-independent manner. This chain is MPN domain-containing protein, found in Mus musculus (Mouse).